Here is a 287-residue protein sequence, read N- to C-terminus: Casein kinase II subunit beta-1 (287 aa).

Positions 1–97 are disordered; that stretch reads MYRDRGTVNS…ESDVSGSDGE (97 aa). Over residues 13 to 25 the composition is skewed to basic and acidic residues; sequence EVVDRKRINDALE. Over residues 41–50 the composition is skewed to low complexity; sequence GTVTAATTTA. The span at 78–97 shows a compositional bias: acidic residues; it reads SDDESDTDSEESDVSGSDGE.

Belongs to the casein kinase 2 subunit beta family. As to quaternary structure, heterotetramer of two catalytic alpha subunits and two regulatory beta subunits. Interacts with CCA1. Interacts with LHY. Phosphorylated by alpha subunit.

Its subcellular location is the cytoplasm. The protein resides in the cytosol. It is found in the nucleus. Plays a complex role in regulating the basal catalytic activity of the alpha subunit. The tetrameric holoenzyme CK2, composed of two alpha and two beta subunits, phosphorylates the transcription factor GBFl, resulting in stimulation of its DNA binding activity. CK2 phosphorylates the transcription factor PIF1 after an exposure to light, resulting in a proteasome-dependent degradation of PIF1 and promotion of photomorphogenesis. CK2 phosphorylates translation initiation factors. May participate in the regulation of the initiation of translation. Stimulates the binding of CCA1 to promoters. The protein is Casein kinase II subunit beta-1 (CKB1) of Arabidopsis thaliana (Mouse-ear cress).